Reading from the N-terminus, the 309-residue chain is Uridylate-specific endoribonuclease C (309 aa).

The N-terminal stretch at 1–22 is a signal peptide; that stretch reads MASGYDFGWIPVLLSLFTLTDA. In terms of domain architecture, EndoU spans 27-303; the sequence is VNQELSNIFN…IGTAYPKLLS (277 aa). N53 and N121 each carry an N-linked (GlcNAc...) asparagine glycan. Active-site residues include H181, H197, and K242.

Belongs to the ENDOU family. As to quaternary structure, monomer. Requires Mn(2+) as cofactor.

The protein localises to the secreted. The enzyme catalyses ribonucleotidyl-uridine-RNA = a 5'-end dephospho-uridine-RNA + a 3'-end 2',3'-cyclophospho-ribonucleotide-RNA. Endoribonuclease that cleaves single-stranded RNAs at 5' of uridylates and releases a product with a 2',3'-cyclic phosphate at the 3'-end. The UU and GU sites are more efficiently cleaved than CU and AU sites. This Danio rerio (Zebrafish) protein is Uridylate-specific endoribonuclease C (endouc).